The following is a 300-amino-acid chain: N-acetylmuramic acid 6-phosphate etherase (300 aa).

One can recognise an SIS domain in the interval 57 to 220 (IAVAFQSGGR…TTGAMIRTGK (164 aa)). The Proton donor role is filled by Glu85. Residue Glu116 is part of the active site.

The protein belongs to the GCKR-like family. MurNAc-6-P etherase subfamily. Homodimer.

It carries out the reaction N-acetyl-D-muramate 6-phosphate + H2O = N-acetyl-D-glucosamine 6-phosphate + (R)-lactate. Its pathway is amino-sugar metabolism; 1,6-anhydro-N-acetylmuramate degradation. It functions in the pathway amino-sugar metabolism; N-acetylmuramate degradation. It participates in cell wall biogenesis; peptidoglycan recycling. In terms of biological role, specifically catalyzes the cleavage of the D-lactyl ether substituent of MurNAc 6-phosphate, producing GlcNAc 6-phosphate and D-lactate. Together with AnmK, is also required for the utilization of anhydro-N-acetylmuramic acid (anhMurNAc) either imported from the medium or derived from its own cell wall murein, and thus plays a role in cell wall recycling. The polypeptide is N-acetylmuramic acid 6-phosphate etherase (Aliivibrio fischeri (strain MJ11) (Vibrio fischeri)).